Reading from the N-terminus, the 412-residue chain is MIDNLQPLRGMKDLLPDDYQVHNYIINKARDVGVLYGYKQMSTPILEYTRVFNRCMGDSSDVISKEIYSFVDKSNNAIALRPEFTSGIIRSFISNGLHHKLPLKLFSTGPVFRYDRPQAGRQRQFHQLNYEYLGAKGAITDAETLKLAVDILKALEIEEDTTLELNSLGCSESRIVYQQKLVEYLNDFKDKLSGESKIRLNKNPMRILDSKSEIDQKIIANAPILSDYHTNESKKYFDELLKYLDILGIKYSINPRLVRGLDYYCHTVFEFTTQKLGSQATILAGGRYDMLSRIMGNYDVHAIGFAAGIERIALMKKYNIFVIKPVFVLPIGKNNICYALDIVDKLRLHNIISIIDPIGKIAKRIQRVLNEDAKFIIFVGDEEKMNNNLKFKDLKNQKEYIIDLEKVLELLK.

Belongs to the class-II aminoacyl-tRNA synthetase family. Homodimer.

It localises to the cytoplasm. It catalyses the reaction tRNA(His) + L-histidine + ATP = L-histidyl-tRNA(His) + AMP + diphosphate + H(+). The chain is Histidine--tRNA ligase from Rickettsia typhi (strain ATCC VR-144 / Wilmington).